Consider the following 328-residue polypeptide: Malate dehydrogenase (328 aa).

11–17 (GAAGQIG) serves as a coordination point for NAD(+). Residues arginine 94 and arginine 100 each contribute to the substrate site. Residues asparagine 107, glutamine 114, and 131–133 (VGN) contribute to the NAD(+) site. Residues asparagine 133 and arginine 164 each contribute to the substrate site. The active-site Proton acceptor is the histidine 189.

This sequence belongs to the LDH/MDH superfamily. MDH type 2 family.

It carries out the reaction (S)-malate + NAD(+) = oxaloacetate + NADH + H(+). Functionally, catalyzes the reversible oxidation of malate to oxaloacetate. The sequence is that of Malate dehydrogenase from Xanthomonas axonopodis pv. citri (strain 306).